The chain runs to 396 residues: Elongation factor Tu (396 aa).

The region spanning 10-206 (KPHCNIGTIG…TVDAYIPQPE (197 aa)) is the tr-type G domain. A G1 region spans residues 19 to 26 (GHVDHGKT). A GTP-binding site is contributed by 19-26 (GHVDHGKT). Residue Thr26 coordinates Mg(2+). The interval 60-64 (GITIS) is G2. Residues 81-84 (DCPG) form a G3 region. Residues 81-85 (DCPGH) and 136-139 (NKVD) contribute to the GTP site. Residues 136–139 (NKVD) are G4. The segment at 174 to 176 (SAL) is G5.

It belongs to the TRAFAC class translation factor GTPase superfamily. Classic translation factor GTPase family. EF-Tu/EF-1A subfamily. As to quaternary structure, monomer.

Its subcellular location is the cytoplasm. It catalyses the reaction GTP + H2O = GDP + phosphate + H(+). In terms of biological role, GTP hydrolase that promotes the GTP-dependent binding of aminoacyl-tRNA to the A-site of ribosomes during protein biosynthesis. The polypeptide is Elongation factor Tu (Methylocella silvestris (strain DSM 15510 / CIP 108128 / LMG 27833 / NCIMB 13906 / BL2)).